The following is a 571-amino-acid chain: LLVVGVAIGVVTFVNKGGGAGGDKTLNSHQKAVESLCASATDKGSCAKTLDPVKSDDPSKLIKAFMLATKDAVTKSTNFTASTEEGMGKNMNATSKAVLDYCKRVLMYALEDLETIVEEMGEDLQQSGSKMDQLKQWLTGVFNYQTDCIDDIEESELRKVMGEGIRHSKILSSNAIDIFHALTTAMSQMNVKVDDMKKGNLGETPAPDRDLLEDLDQKGLPKWHSDKDRKLMAQAGRPGAPADEGIGEGGGGGGKIKPTHVVAKDGSGQFKTISEAVKACPEKNPGRCIIYIKAGVYKEQVTIPKKVNNVFMFGDGATQTIITFDRSVGLSPGTTTSLSGTVQVESEGFMAKWIGFQNTAGPLGNQAVAFRVNGDRAVIFNCRFDGYQDTLYVNNGRQFYRNIVVSGTVDFINGKSATVIQNSLILCRKGSPGQTNHVTADGKQKGKAVKIGIVLHNCRIMADKELEADRLTVKSYLGRPWKPFATTAVIGTEIGDLIQPTGWNEWQGEKFHLTATYVEFNNRGPGANPAARVPWAKMAKSAAEVERFTVANWLTPANWIQEANVTVQLGL.

The pectinesterase inhibitor stretch occupies residues 27–178; it reads NSHQKAVESL…KILSSNAIDI (152 aa). Positions 233-254 are disordered; it reads AQAGRPGAPADEGIGEGGGGGG. Residues 259 to 558 form a pectinesterase region; the sequence is THVVAKDGSG…TVANWLTPAN (300 aa). 2 residues coordinate substrate: Thr336 and Gln366. The active-site Proton donor; for pectinesterase activity is the Asp389. Asp410 acts as the Nucleophile; for pectinesterase activity in catalysis. The substrate site is built by Arg479 and Trp481.

It in the N-terminal section; belongs to the PMEI family. The protein in the C-terminal section; belongs to the pectinesterase family.

Its subcellular location is the secreted. It is found in the cell wall. It carries out the reaction [(1-&gt;4)-alpha-D-galacturonosyl methyl ester](n) + n H2O = [(1-&gt;4)-alpha-D-galacturonosyl](n) + n methanol + n H(+). The protein operates within glycan metabolism; pectin degradation; 2-dehydro-3-deoxy-D-gluconate from pectin: step 1/5. In terms of biological role, acts in the modification of cell walls via demethylesterification of cell wall pectin. The sequence is that of Pectinesterase/pectinesterase inhibitor from Brassica campestris (Field mustard).